Here is a 211-residue protein sequence, read N- to C-terminus: Endo-1,4-beta-xylanase 6 (211 aa).

The first 16 residues, 1–16, serve as a signal peptide directing secretion; the sequence is MKVTAAFAGLLVTALA. In terms of domain architecture, GH11 spans 19 to 210; it reads APEPVLVSRS…GAGSASVTIS (192 aa). The active-site Nucleophile is the Glu106. Glu197 acts as the Proton donor in catalysis.

The protein belongs to the glycosyl hydrolase 11 (cellulase G) family.

The protein localises to the secreted. The enzyme catalyses Endohydrolysis of (1-&gt;4)-beta-D-xylosidic linkages in xylans.. Its pathway is glycan degradation; xylan degradation. Functionally, endo-1,4-beta-xylanase involved in the hydrolysis of xylan, a major structural heterogeneous polysaccharide found in plant biomass representing the second most abundant polysaccharide in the biosphere, after cellulose. This chain is Endo-1,4-beta-xylanase 6 (XYN6), found in Aspergillus niger.